The sequence spans 336 residues: MVKEYLKKISEGKHLTFDEAKEIVLSIDREEITEAQLGAVLLGLRLKGENPEEIAGFVDVLHEKAKKIPNRTPAVDVCGTGGDKSNTFNISTAVAFTLASLGVRVAKHGNRAMSSKAGSIDVIEALGFKCSDNPEEIARDIDEKGIGIIFAPYFHPVVGKAVKVRRELGIGTIFNMAGPMLNPANLSGQILGVYSEKVMRNMAEASLILKKDNILFYHGKDDGIDEISLSGKTIFAYLKNGKIDYFDFSPEDIGIKRYQKEEFKGGDAQENAKILEDIFKGVAKESHIDIVAVNSAFALWVLGKVKSVKEGFDMVKEHIMKGKVYEFVETLRGRTA.

5-phospho-alpha-D-ribose 1-diphosphate contacts are provided by residues Gly79, 82–83, Thr87, 89–92, 107–115, and Ser119; these read GD, NIST, and KHGNRAMSS. Anthranilate is bound at residue Gly79. Residue Ser91 participates in Mg(2+) binding. Residue Asn110 coordinates anthranilate. Anthranilate is bound at residue Arg165. Mg(2+) contacts are provided by Asp225 and Glu226.

This sequence belongs to the anthranilate phosphoribosyltransferase family. Homodimer. The cofactor is Mg(2+).

The enzyme catalyses N-(5-phospho-beta-D-ribosyl)anthranilate + diphosphate = 5-phospho-alpha-D-ribose 1-diphosphate + anthranilate. The protein operates within amino-acid biosynthesis; L-tryptophan biosynthesis; L-tryptophan from chorismate: step 2/5. Its function is as follows. Catalyzes the transfer of the phosphoribosyl group of 5-phosphorylribose-1-pyrophosphate (PRPP) to anthranilate to yield N-(5'-phosphoribosyl)-anthranilate (PRA). The polypeptide is Anthranilate phosphoribosyltransferase (Dictyoglomus thermophilum (strain ATCC 35947 / DSM 3960 / H-6-12)).